The primary structure comprises 367 residues: Alanine racemase (367 aa).

The Proton acceptor; specific for D-alanine role is filled by Lys-40. The residue at position 40 (Lys-40) is an N6-(pyridoxal phosphate)lysine. Arg-136 serves as a coordination point for substrate. The Proton acceptor; specific for L-alanine role is filled by Tyr-263. Met-310 serves as a coordination point for substrate.

This sequence belongs to the alanine racemase family. Pyridoxal 5'-phosphate serves as cofactor.

The catalysed reaction is L-alanine = D-alanine. Its pathway is amino-acid biosynthesis; D-alanine biosynthesis; D-alanine from L-alanine: step 1/1. Functionally, catalyzes the interconversion of L-alanine and D-alanine. May also act on other amino acids. The polypeptide is Alanine racemase (alr) (Streptococcus thermophilus (strain ATCC BAA-491 / LMD-9)).